We begin with the raw amino-acid sequence, 935 residues long: C-1-tetrahydrofolate synthase, cytoplasmic (935 aa).

The residue at position 1 (Met1) is an N-acetylmethionine. The interval 2 to 291 (APAEILNGRE…MLMQSTVESA (290 aa)) is methylenetetrahydrofolate dehydrogenase and methenyltetrahydrofolate cyclohydrolase (D/C) domain. Substrate is bound by residues 52 to 56 (YINVK) and 99 to 101 (VQL). Lys56 is a catalytic residue. Residues 172–174 (GRS) and Ser197 contribute to the NADP(+) site. 272 to 276 (PGGVG) lines the substrate pocket. The interval 310–935 (LNLKTPDPSD…PETQQVNGLF (626 aa)) is formyltetrahydrofolate synthetase domain. At Ser318 the chain carries Phosphoserine. 380-387 (TPLGEGKS) lines the ATP pocket. 2 positions are modified to phosphoserine: Ser413 and Ser490.

It in the N-terminal section; belongs to the tetrahydrofolate dehydrogenase/cyclohydrolase family. This sequence in the C-terminal section; belongs to the formate--tetrahydrofolate ligase family. Homodimer.

The protein resides in the cytoplasm. The enzyme catalyses (6R)-5,10-methylene-5,6,7,8-tetrahydrofolate + NADP(+) = (6R)-5,10-methenyltetrahydrofolate + NADPH. It carries out the reaction (6R)-5,10-methenyltetrahydrofolate + H2O = (6R)-10-formyltetrahydrofolate + H(+). It catalyses the reaction (6S)-5,6,7,8-tetrahydrofolate + formate + ATP = (6R)-10-formyltetrahydrofolate + ADP + phosphate. It participates in one-carbon metabolism; tetrahydrofolate interconversion. Its function is as follows. Trifunctional enzyme that catalyzes the interconversion of three forms of one-carbon-substituted tetrahydrofolate: (6R)-5,10-methylene-5,6,7,8-tetrahydrofolate, 5,10-methenyltetrahydrofolate and (6S)-10-formyltetrahydrofolate. These derivatives of tetrahydrofolate are differentially required in nucleotide and amino acid biosynthesis, (6S)-10-formyltetrahydrofolate being required for purine biosynthesis while (6R)-5,10-methylene-5,6,7,8-tetrahydrofolate is used for serine and methionine biosynthesis for instance. The sequence is that of C-1-tetrahydrofolate synthase, cytoplasmic (MTHFD1) from Pongo abelii (Sumatran orangutan).